The primary structure comprises 233 residues: Large ribosomal subunit protein eL6x (233 aa).

Over residues 48-72 (HDAKSKVDAPVEKPPKFYPAEDVKK) the composition is skewed to basic and acidic residues. Residues 48–80 (HDAKSKVDAPVEKPPKFYPAEDVKKPLPNRRTA) are disordered.

It belongs to the eukaryotic ribosomal protein eL6 family.

This is Large ribosomal subunit protein eL6x (RPL6C) from Arabidopsis thaliana (Mouse-ear cress).